The primary structure comprises 172 residues: Alpha-crystallin A chain (172 aa).

Position 1 is an N-acetylmethionine (M1). A required for complex formation with BFSP1 and BFSP2 region spans residues 1 to 63 (MDVTIQHPWF…RTVLDSGISE (63 aa)). Deamidated glutamine; partial is present on Q6. A Phosphoserine modification is found at S45. Q50 bears the Deamidated glutamine; partial mark. The sHSP domain occupies 52-163 (LFRTVLDSGI…HERAIPVARE (112 aa)). K70 bears the N6-acetyllysine mark. Q90 bears the Deamidated glutamine; partial mark. K99 bears the N6-acetyllysine mark. Residue H100 coordinates Zn(2+). At N101 the chain carries Deamidated asparagine; partial. Zn(2+) contacts are provided by E102 and H107. S122 is subject to Phosphoserine. N123 is modified (deamidated asparagine; partial). Position 147 is a deamidated glutamine; partial (Q147). H154 lines the Zn(2+) pocket. An O-linked (GlcNAc) serine glycan is attached at S168.

It belongs to the small heat shock protein (HSP20) family. As to quaternary structure, heteromer composed of three CRYAA and one CRYAB subunits. Inter-subunit bridging via zinc ions enhances stability, which is crucial as there is no protein turn over in the lens. Can also form homodimers and homotetramers (dimers of dimers) which serve as the building blocks of homooligomers. Within homooligomers, the zinc-binding motif is created from residues of 3 different molecules. His-100 and Glu-102 from one molecule are ligands of the zinc ion, and His-107 and His-154 residues from additional molecules complete the site with tetrahedral coordination geometry. Part of a complex required for lens intermediate filament formation composed of BFSP1, BFSP2 and CRYAA. Acetylation at Lys-70 may increase chaperone activity. Post-translationally, undergoes age-dependent proteolytical cleavage at the C-terminus.

Its subcellular location is the cytoplasm. The protein resides in the nucleus. Functionally, contributes to the transparency and refractive index of the lens. Acts as a chaperone, preventing aggregation of various proteins under a wide range of stress conditions. Required for the correct formation of lens intermediate filaments as part of a complex composed of BFSP1, BFSP2 and CRYAA. The sequence is that of Alpha-crystallin A chain (CRYAA) from Macaca mulatta (Rhesus macaque).